The following is a 100-amino-acid chain: Integration host factor subunit alpha (100 aa).

Positions 53-72 are disordered; sequence FDLRDKRQRPGRNPKTGEEI.

This sequence belongs to the bacterial histone-like protein family. Heterodimer of an alpha and a beta chain.

In terms of biological role, this protein is one of the two subunits of integration host factor, a specific DNA-binding protein that functions in genetic recombination as well as in transcriptional and translational control. The protein is Integration host factor subunit alpha of Pseudomonas putida (strain ATCC 700007 / DSM 6899 / JCM 31910 / BCRC 17059 / LMG 24140 / F1).